Consider the following 615-residue polypeptide: Nitrogen permease regulator 2 (615 aa).

Low complexity predominate over residues 143–167 (STTTPSTAGPSSTPNPSSNTTPTHP). 3 disordered regions span residues 143–176 (STTT…TKDM), 354–398 (SLGS…QNSS), and 527–551 (SATG…VSFE). Residue Ser362 is modified to Phosphoserine. Residues 373–398 (SSSIPSNPDSRTTSFSSTSRVSQNSS) show a composition bias toward low complexity. The span at 527-539 (SATGSRNTAQSGN) shows a compositional bias: polar residues.

Belongs to the NPR2 family. As to quaternary structure, component of the SEA complex composed of at least IML1/SEA1, RTC1/SEA2, MTC5/SEA3, NPR2, NPR3, SEA4, SEC13 and SEH1. Forms a heterodimer with NPR3.

It localises to the vacuole membrane. Its function is as follows. Component of the SEA complex which coats the vacuolar membrane and is involved in intracellular trafficking, autophagy, response to nitrogen starvation, and amino acid biogenesis. Mediates inactivation of the TORC1 complex in response to amino acid starvation. Post-transcriptional regulator of nitrogen permeases. May be involved in putative NPR1-dependent phosphorylation of nitrogen permeases or in the processing and targeting of nitrogen permeases at the level of the endoplasmic reticulum. In Saccharomyces cerevisiae (strain ATCC 204508 / S288c) (Baker's yeast), this protein is Nitrogen permease regulator 2 (NPR2).